A 292-amino-acid polypeptide reads, in one-letter code: Putative xanthine dehydrogenase FAD-binding subunit XdhB (292 aa).

One can recognise an FAD-binding PCMH-type domain in the interval 1 to 176 (MFDFASYHRA…VAFHFPPQPK (176 aa)). Residues 27–34 (KLLAGGTD), 109–113 (ATYGG), I165, and F184 contribute to the FAD site.

As to quaternary structure, heterotrimer of XdhA, XdhB and XdhC. It depends on FAD as a cofactor.

It catalyses the reaction xanthine + NAD(+) + H2O = urate + NADH + H(+). The enzyme catalyses hypoxanthine + NAD(+) + H2O = xanthine + NADH + H(+). It functions in the pathway purine metabolism; hypoxanthine degradation; urate from hypoxanthine: step 1/2. Its pathway is purine metabolism; hypoxanthine degradation; urate from hypoxanthine: step 2/2. In terms of biological role, presumed to be a dehydrogenase, but possibly an oxidase. Participates in limited purine salvage (requires aspartate) but does not support aerobic growth on purines as the sole carbon source (purine catabolism). This Escherichia coli (strain K12) protein is Putative xanthine dehydrogenase FAD-binding subunit XdhB (xdhB).